We begin with the raw amino-acid sequence, 294 residues long: MPQDPRHPEHQYLDLVKHILENGARRMDRTGTGTLSVFGATMRFSLEDNTFPLLTTRRVFYRGVVEELLFFLRGETDSKVLEKKGVRIWEKNGAKQFLQSVGIDREEGDLGPIYGFQWRHFGARYETSASSYEGKGVDQIASAIAAIRANPASRRIVVSAWNPTDLGSMALPPCHVLFQFNVTDGKLSCAMYQRSGDMGLGVPFNIASYSLLTILVAHLTGLQPGEFVHFLGDAHVYLDHVDSLRQQIQRPPRAFPKLFVSPKGPRTEPEHFQYEDFELVGYDPHPAIKMNMSA.

Residues arginine 29 and 154-155 (RR) contribute to the dUMP site. Catalysis depends on cysteine 174, which acts as the Nucleophile. DUMP is bound by residues 194–197 (RSGD), asparagine 205, and 235–237 (HVY). (6R)-5,10-methylene-5,6,7,8-tetrahydrofolate is bound at residue aspartate 197.

The protein belongs to the thymidylate synthase family.

It catalyses the reaction dUMP + (6R)-5,10-methylene-5,6,7,8-tetrahydrofolate = 7,8-dihydrofolate + dTMP. It participates in pyrimidine metabolism; dTTP biosynthesis. This Encephalitozoon cuniculi (strain GB-M1) (Microsporidian parasite) protein is Thymidylate synthase 1/2 (TS-1).